The sequence spans 385 residues: Glucans biosynthesis protein C (385 aa).

10 helical membrane passes run 17-37 (AWLM…SHTW), 60-80 (MQVF…RYPL), 91-111 (VGIP…IMLQ), 137-157 (ISHL…VWIF), 173-193 (KFSM…YAVI), 212-232 (FIVM…LAFI), 245-262 (RGST…LLNQ), 274-294 (TESV…FSFG), 311-331 (ASLF…AYIT), and 338-358 (WLGF…LYEI).

This sequence belongs to the acyltransferase 3 family. OpgC subfamily.

The protein localises to the cell membrane. The protein operates within glycan metabolism; osmoregulated periplasmic glucan (OPG) biosynthesis. Necessary for the succinyl substitution of periplasmic glucans. Could catalyze the transfer of succinyl residues from the cytoplasmic side of the membrane to the nascent glucan backbones on the periplasmic side of the membrane. In Escherichia coli O81 (strain ED1a), this protein is Glucans biosynthesis protein C.